The following is a 460-amino-acid chain: Solute carrier family 52, riboflavin transporter, member 3 (460 aa).

Residues 1 to 6 (MAFLTH) lie on the Cytoplasmic side of the membrane. A helical membrane pass occupies residues 7–27 (LLVCVFGMGSWVAINGLWVEL). The Extracellular segment spans residues 28–37 (PLLVTELPEA). The helical transmembrane segment at 38–58 (WYLPSYLTVVIQLANIGPLLV) threads the bilayer. Residues 59-71 (TLMHRFRPGCLSE) lie on the Cytoplasmic side of the membrane. The chain crosses the membrane as a helical span at residues 72 to 92 (VPVIFLILCVGTAACILLAFL). Residues 93–105 (WNVTSWIQGGQHS) lie on the Extracellular side of the membrane. A glycan (N-linked (GlcNAc...) asparagine) is linked at N94. A helical transmembrane segment spans residues 106–126 (VAFIVLTFFLALVDCTSSVTF). Residues 127–137 (LPFMSQLPTYY) lie on the Cytoplasmic side of the membrane. The helical transmembrane segment at 138–158 (LTTFFIGEGLSGLLPALVALV) threads the bilayer. The Extracellular segment spans residues 159–211 (QGSGITTCVNVTETPGTTLNTMETPITQGNLSPSLPSPSWHQESRYLAPRFSP). The N-linked (GlcNAc...) asparagine glycan is linked to N168. A helical transmembrane segment spans residues 212–232 (LLFFLLLSFLTGCCLVAFFLL). Residues 233–291 (QRQPWGRQGSIEDLLHSQVTLHSIRPRDTEDTSSLGAPVSSPGKGSVEASVASLRPAQL) lie on the Cytoplasmic side of the membrane. S242 and S266 each carry phosphoserine. Residues 292–312 (AFIYSVVAFVNALTNGVLPSV) traverse the membrane as a helical segment. At 313–326 (QTYSCLPYGPVAYH) the chain is on the extracellular side. The chain crosses the membrane as a helical span at residues 327-347 (LSATLSSVASPLACFLPIFLP). At 348–350 (NRS) the chain is on the cytoplasmic side. A helical membrane pass occupies residues 351 to 371 (LLFLGVLTVLGTGFGAYNMAM). The Extracellular portion of the chain corresponds to 372-387 (AAMSPCPVLQGHWGGE). Cysteines 377 and 454 form a disulfide. The chain crosses the membrane as a helical span at residues 388–408 (VLIVLSWVLFAACLSYVKVML). The Cytoplasmic segment spans residues 409–418 (GVILRDRSRS). The helical transmembrane segment at 419–439 (ALLWCGAAVQLGSLIGALLMF) threads the bilayer. Over 440–460 (PLVNVLKLFSSADYCSLDCSV) the chain is Extracellular.

The protein belongs to the riboflavin transporter family. Within the small intestine, it is particularly expressed in the jujenum and the ileum. Almost negligible expression in the stomach, duodenum, and large intestine.

It localises to the cell membrane. The catalysed reaction is riboflavin(in) = riboflavin(out). Its function is as follows. Plasma membrane transporter mediating the uptake by cells of the water soluble vitamin B2/riboflavin that plays a key role in biochemical oxidation-reduction reactions of the carbohydrate, lipid, and amino acid metabolism. This chain is Solute carrier family 52, riboflavin transporter, member 3 (Slc52a3), found in Mus musculus (Mouse).